Consider the following 316-residue polypeptide: Prenytransferase adrG (316 aa).

The next 7 helical transmembrane spans lie at 36-56 (LLGFYLNTSPYLVGVAFCASI), 60-80 (KIPITVLLHRTILLSIWSIFL), 131-151 (VLIYLPWPCAVDCLIITFFAL), 163-183 (PQITLVNIGWAIPMAMHSLGL), 191-211 (PTVCMFLFIGLVIIMIDVIYS), 247-267 (GFLAMAGFFTGLGLSFFVVSV), and 294-314 (KSAFFLATLFWLFGFVIEYCL).

Belongs to the UbiA prenyltransferase family. Mg(2+) serves as cofactor.

It is found in the membrane. It carries out the reaction 3,5-dimethylorsellinate + (2E,6E)-farnesyl diphosphate = (3R)-3-farnesyl-6-hydroxy-2,3,5-trimethyl-4-oxocyclohexa-1,5-diene-1-carboxylate + diphosphate + H(+). The protein operates within secondary metabolite biosynthesis; terpenoid biosynthesis. Functionally, prenytransferase; part of the gene cluster that mediates the biosynthesis of andrastins, meroterpenoid compounds that exhibit inhibitory activity against ras farnesyltransferase, suggesting that they could be promising leads for antitumor agents. The first step of the pathway is the synthesis of 3,5-dimethylorsellinic acid (DMOA) by the polyketide synthase adrD via condensation of one acetyl-CoA starter unit with 3 malonyl-CoA units and 2 methylations. DMAO is then converted to farnesyl-DMAO by the prenyltransferase adrG. The methyltransferase adrK catalyzes the methylation of the carboxyl group of farnesyl-DMAO to farnesyl-DMAO methyl ester which is further converted to epoxyfarnesyl-DMAO methyl ester by the FAD-dependent monooxygenase adrH. The terpene cyclase adrI then catalyzes the carbon skeletal rearrangement to generate the andrastin E, the first compound in the pathway having the andrastin scaffold, with the tetracyclic ring system. The post-cyclization tailoring enzymes adrF, adrE, adrJ, and adrA, are involved in the conversion of andrastin E into andrastin A. The short chain dehydrogenase adrF is responsible for the oxidation of the C-3 a hydroxyl group of andrastin E to yield the corresponding ketone, andrastin D. The ketoreductase adrE stereoselectively reduces the carbonyl moiety to reverse the stereochemistry of the C-3 position to yield andrastin F. The acetyltransferase adrJ is the acetyltransferase that attaches the acetyl group to the C-3 hydroxyl group of andrastin F to yield andrastin C. Finally, the cytochrome P450 monooxygenase adrA catalyzes two sequential oxidation reactions of the C-23 methyl group, to generate the corresponding alcohol andrastin B, and aldehyde andrastin A. The polypeptide is Prenytransferase adrG (Penicillium roqueforti).